The chain runs to 144 residues: 3-hydroxyacyl-[acyl-carrier-protein] dehydratase FabZ (144 aa).

The active site involves H48.

Belongs to the thioester dehydratase family. FabZ subfamily.

It localises to the cytoplasm. It catalyses the reaction a (3R)-hydroxyacyl-[ACP] = a (2E)-enoyl-[ACP] + H2O. In terms of biological role, involved in unsaturated fatty acids biosynthesis. Catalyzes the dehydration of short chain beta-hydroxyacyl-ACPs and long chain saturated and unsaturated beta-hydroxyacyl-ACPs. The polypeptide is 3-hydroxyacyl-[acyl-carrier-protein] dehydratase FabZ (Listeria monocytogenes serotype 4b (strain CLIP80459)).